A 107-amino-acid polypeptide reads, in one-letter code: Large ribosomal subunit protein P2 (107 aa).

The tract at residues 86–107 is disordered; it reads PAAAAAEAEEEDDDDMGFGLFD. The segment covering 92–101 has biased composition (acidic residues); the sequence is EAEEEDDDDM.

The protein belongs to the eukaryotic ribosomal protein P1/P2 family. P1 and P2 exist as dimers at the large ribosomal subunit. Post-translationally, phosphorylated.

Plays an important role in the elongation step of protein synthesis. In Trypanosoma brucei brucei, this protein is Large ribosomal subunit protein P2.